The sequence spans 228 residues: Protein Thf1 (228 aa).

Residues 201–223 (IKRSKEVVDELSQTERRKREERA) are a coiled coil. Residues 209–228 (DELSQTERRKREERAVSQPG) form a disordered region.

Belongs to the THF1 family.

Its function is as follows. May be involved in photosynthetic membrane biogenesis. The chain is Protein Thf1 from Gloeobacter violaceus (strain ATCC 29082 / PCC 7421).